Here is a 917-residue protein sequence, read N- to C-terminus: Protein FAN (917 aa).

The region spanning 176–247 (RLARTSFDKN…QDVRRIYKRR (72 aa)) is the GRAM domain. Residues 189–286 (NISEKLHMEC…DRDDLYFYIA (98 aa)) form the BEACH-type PH domain. One can recognise a BEACH domain in the interval 290-575 (EHHVAEHTAE…QLFVTPHPRR (286 aa)). WD repeat units lie at residues 628–658 (IHKE…KMFS), 670–700 (FSNM…YFYS), 712–740 (GHDD…KVWS), 761–791 (EHDV…NIWD), 803–833 (CHSG…NVID), and 884–914 (GHTG…IFWK).

In terms of tissue distribution, ubiquitous.

Its function is as follows. Couples the p55 TNF-receptor (TNF-R55 / TNFR1) to neutral sphingomyelinase (N-SMASE). Specifically binds to the N-smase activation domain of TNF-R55. May regulate ceramide production by N-SMASE. The chain is Protein FAN (NSMAF) from Homo sapiens (Human).